Reading from the N-terminus, the 165-residue chain is NADPH-dependent 7-cyano-7-deazaguanine reductase (165 aa).

The Thioimide intermediate role is filled by Cys56. Asp63 acts as the Proton donor in catalysis. Substrate contacts are provided by residues 78-80 and 97-98; these read VES and HE.

This sequence belongs to the GTP cyclohydrolase I family. QueF type 1 subfamily.

It localises to the cytoplasm. It carries out the reaction 7-aminomethyl-7-carbaguanine + 2 NADP(+) = 7-cyano-7-deazaguanine + 2 NADPH + 3 H(+). The protein operates within tRNA modification; tRNA-queuosine biosynthesis. Catalyzes the NADPH-dependent reduction of 7-cyano-7-deazaguanine (preQ0) to 7-aminomethyl-7-deazaguanine (preQ1). The sequence is that of NADPH-dependent 7-cyano-7-deazaguanine reductase from Oceanobacillus iheyensis (strain DSM 14371 / CIP 107618 / JCM 11309 / KCTC 3954 / HTE831).